The chain runs to 119 residues: Beta-2-microglobulin (119 aa).

Positions 1–20 (MARTVATFFLMLVSLACLDA) are cleaved as a signal peptide. The Ig-like C1-type domain maps to 25–114 (PQVQVYTRHP…VTLKEPKVVT (90 aa)). Cysteines 45 and 100 form a disulfide.

The protein belongs to the beta-2-microglobulin family. As to quaternary structure, heterodimer of an alpha chain and a beta chain. Beta-2-microglobulin is the beta-chain of major histocompatibility complex class I molecules.

The protein localises to the secreted. Its function is as follows. Component of the class I major histocompatibility complex (MHC). Involved in the presentation of peptide antigens to the immune system. The protein is Beta-2-microglobulin (B2M) of Sigmodon hispidus (Hispid cotton rat).